The primary structure comprises 131 residues: Phosphoribosyl-AMP cyclohydrolase (131 aa).

Asp82 provides a ligand contact to Mg(2+). Cys83 contacts Zn(2+). Positions 84 and 86 each coordinate Mg(2+). Zn(2+)-binding residues include Cys99 and Cys106.

Belongs to the PRA-CH family. As to quaternary structure, homodimer. It depends on Mg(2+) as a cofactor. Zn(2+) serves as cofactor.

It localises to the cytoplasm. The catalysed reaction is 1-(5-phospho-beta-D-ribosyl)-5'-AMP + H2O = 1-(5-phospho-beta-D-ribosyl)-5-[(5-phospho-beta-D-ribosylamino)methylideneamino]imidazole-4-carboxamide. The protein operates within amino-acid biosynthesis; L-histidine biosynthesis; L-histidine from 5-phospho-alpha-D-ribose 1-diphosphate: step 3/9. Catalyzes the hydrolysis of the adenine ring of phosphoribosyl-AMP. This chain is Phosphoribosyl-AMP cyclohydrolase, found in Methanospirillum hungatei JF-1 (strain ATCC 27890 / DSM 864 / NBRC 100397 / JF-1).